Consider the following 160-residue polypeptide: MAKQKKHPQGTIALNKKALHDYFVEQKFEAGVALAGWEVKSLRAGKAQLVDSYVLLKDDEAWLMGAHITPLKTASTHVIADPIRTRKLLLHKRELDKLFGAVQQKGYTCVALSLYWKQHLVKCEIALAKGKKDFDKRHVEKERDANREVQRAMRSKGKDD.

A disordered region spans residues 136 to 160 (KRHVEKERDANREVQRAMRSKGKDD).

This sequence belongs to the SmpB family.

It is found in the cytoplasm. In terms of biological role, required for rescue of stalled ribosomes mediated by trans-translation. Binds to transfer-messenger RNA (tmRNA), required for stable association of tmRNA with ribosomes. tmRNA and SmpB together mimic tRNA shape, replacing the anticodon stem-loop with SmpB. tmRNA is encoded by the ssrA gene; the 2 termini fold to resemble tRNA(Ala) and it encodes a 'tag peptide', a short internal open reading frame. During trans-translation Ala-aminoacylated tmRNA acts like a tRNA, entering the A-site of stalled ribosomes, displacing the stalled mRNA. The ribosome then switches to translate the ORF on the tmRNA; the nascent peptide is terminated with the 'tag peptide' encoded by the tmRNA and targeted for degradation. The ribosome is freed to recommence translation, which seems to be the essential function of trans-translation. This chain is SsrA-binding protein, found in Ectopseudomonas mendocina (strain ymp) (Pseudomonas mendocina).